The sequence spans 252 residues: 4-hydroxy-tetrahydrodipicolinate reductase (252 aa).

NAD(+) is bound at residue 8 to 13 (GALGRM). Position 36 (Arg36) interacts with NADP(+). NAD(+) is bound by residues 89 to 91 (GTT) and 114 to 117 (SSNF). The Proton donor/acceptor role is filled by His146. Residue His147 coordinates (S)-2,3,4,5-tetrahydrodipicolinate. Catalysis depends on Lys150, which acts as the Proton donor. 156-157 (GT) lines the (S)-2,3,4,5-tetrahydrodipicolinate pocket.

This sequence belongs to the DapB family.

Its subcellular location is the cytoplasm. The enzyme catalyses (S)-2,3,4,5-tetrahydrodipicolinate + NAD(+) + H2O = (2S,4S)-4-hydroxy-2,3,4,5-tetrahydrodipicolinate + NADH + H(+). It carries out the reaction (S)-2,3,4,5-tetrahydrodipicolinate + NADP(+) + H2O = (2S,4S)-4-hydroxy-2,3,4,5-tetrahydrodipicolinate + NADPH + H(+). The protein operates within amino-acid biosynthesis; L-lysine biosynthesis via DAP pathway; (S)-tetrahydrodipicolinate from L-aspartate: step 4/4. Its function is as follows. Catalyzes the conversion of 4-hydroxy-tetrahydrodipicolinate (HTPA) to tetrahydrodipicolinate. The chain is 4-hydroxy-tetrahydrodipicolinate reductase from Methanoculleus marisnigri (strain ATCC 35101 / DSM 1498 / JR1).